Consider the following 467-residue polypeptide: Cysteine--tRNA ligase (467 aa).

Cys30 lines the Zn(2+) pocket. The 'HIGH' region motif lies at 32-42; the sequence is PTVYDDSHLGH. Residues Cys209, His239, and Glu243 each coordinate Zn(2+). Positions 271–275 match the 'KMSKS' region motif; the sequence is KMSKS. An ATP-binding site is contributed by Lys274.

This sequence belongs to the class-I aminoacyl-tRNA synthetase family. Monomer. Requires Zn(2+) as cofactor.

The protein localises to the cytoplasm. It catalyses the reaction tRNA(Cys) + L-cysteine + ATP = L-cysteinyl-tRNA(Cys) + AMP + diphosphate. The chain is Cysteine--tRNA ligase from Aliarcobacter butzleri (strain RM4018) (Arcobacter butzleri).